The following is a 528-amino-acid chain: MMLPRNSPHRTESTLAYNNNNSNNNNNNNGSSLFQRKPLAPINSEFKISKPQHIKPTTHSHTFTTPTPKTRNTATTTTNNNNRNNHQYRNPNLNTSLVFTPTKNSSSSSSSHSSSLLSSSPFVEEPENQPESNHTRATSHYRTTSTSQYKSSANKDASHSLITSSKRKTSTKQTSESTNPKRRTTTTATQNTNNNKILNPSLSSSTIRFSTVSSSTSSSTTSSSSSSHTSPKPQQQLTLDDFEFGKILGKGKLGRVYCVKHKQSGLIFALKVMSKSEIMNLKLEKSLRREIEIQSNLYHINITRLYSWFHDSINIYLLLEYSIEGELYTHLKKLKRFDNIMASNYIFQITQALIFLHQRGIIHRDLKPENIMVSLDNQLKLSDFGWSVQINQNQNQNQIHNQTQTQKTPHQKKQKQKRLTICGTLDYLPPEMIESKSHDFSVDIWALGILCYELLVGKPPFEAINRNITYEKIAKVDIKYPSNLDVDAIDLISKLVVKDPNKRLSLKEVLNHNWIIKNKPKWPKNIYK.

Disordered regions lie at residues 1–35 (MMLP…SLFQ) and 48–235 (ISKP…KPQQ). Low complexity-rich tracts occupy residues 18-29 (NNNNSNNNNNNN) and 59-94 (HSHT…PNLN). The span at 95–104 (TSLVFTPTKN) shows a compositional bias: polar residues. Positions 105–120 (SSSSSSSHSSSLLSSS) are enriched in low complexity. The segment covering 129 to 155 (QPESNHTRATSHYRTTSTSQYKSSANK) has biased composition (polar residues). Over residues 185–230 (TTTATQNTNNNKILNPSLSSSTIRFSTVSSSTSSSTTSSSSSSHTS) the composition is skewed to low complexity. One can recognise a Protein kinase domain in the interval 242-515 (FEFGKILGKG…LKEVLNHNWI (274 aa)). Residues 248–256 (LGKGKLGRV) and lysine 271 each bind ATP. Aspartate 365 (proton acceptor) is an active-site residue.

The protein belongs to the protein kinase superfamily. Ser/Thr protein kinase family. Aurora subfamily.

The protein localises to the nucleus. The protein resides in the cytoplasm. Its subcellular location is the cytoskeleton. It localises to the spindle. It is found in the chromosome. The protein localises to the centromere. The protein resides in the kinetochore. The enzyme catalyses L-seryl-[protein] + ATP = O-phospho-L-seryl-[protein] + ADP + H(+). It carries out the reaction L-threonyl-[protein] + ATP = O-phospho-L-threonyl-[protein] + ADP + H(+). Functionally, component of the chromosomal passenger complex (CPC), a complex that acts as a key regulator of chromosome segregation and cytokinesis. Has a role in error-correction of aberrent kinetochore-microtubule attachments to ensure that sister kinetochores become bioriented and connect to opposite poles by promoting spindle assembly checkpoint signaling. The polypeptide is Aurora kinase (IPL1) (Candida albicans (strain SC5314 / ATCC MYA-2876) (Yeast)).